Reading from the N-terminus, the 192-residue chain is Fe/S biogenesis protein NfuA (192 aa).

[4Fe-4S] cluster contacts are provided by Cys-149 and Cys-152.

Belongs to the NfuA family. As to quaternary structure, homodimer. [4Fe-4S] cluster is required as a cofactor.

In terms of biological role, involved in iron-sulfur cluster biogenesis. Binds a 4Fe-4S cluster, can transfer this cluster to apoproteins, and thereby intervenes in the maturation of Fe/S proteins. Could also act as a scaffold/chaperone for damaged Fe/S proteins. This Shewanella oneidensis (strain ATCC 700550 / JCM 31522 / CIP 106686 / LMG 19005 / NCIMB 14063 / MR-1) protein is Fe/S biogenesis protein NfuA.